We begin with the raw amino-acid sequence, 178 residues long: ATP synthase subunit b, chloroplastic (178 aa).

The helical transmembrane segment at 34-50 (LAILTGGIFYLGSNALS) threads the bilayer.

It belongs to the ATPase B chain family. As to quaternary structure, F-type ATPases have 2 components, F(1) - the catalytic core - and F(0) - the membrane proton channel. F(1) has five subunits: alpha(3), beta(3), gamma(1), delta(1), epsilon(1). F(0) has four main subunits: a(1), b(1), b'(1) and c(10-14). The alpha and beta chains form an alternating ring which encloses part of the gamma chain. F(1) is attached to F(0) by a central stalk formed by the gamma and epsilon chains, while a peripheral stalk is formed by the delta, b and b' chains.

It localises to the plastid. The protein localises to the chloroplast thylakoid membrane. F(1)F(0) ATP synthase produces ATP from ADP in the presence of a proton or sodium gradient. F-type ATPases consist of two structural domains, F(1) containing the extramembraneous catalytic core and F(0) containing the membrane proton channel, linked together by a central stalk and a peripheral stalk. During catalysis, ATP synthesis in the catalytic domain of F(1) is coupled via a rotary mechanism of the central stalk subunits to proton translocation. Its function is as follows. Component of the F(0) channel, it forms part of the peripheral stalk, linking F(1) to F(0). The sequence is that of ATP synthase subunit b, chloroplastic from Ochrosphaera neapolitana.